Here is a 432-residue protein sequence, read N- to C-terminus: Glutamyl-tRNA reductase (432 aa).

Substrate-binding positions include threonine 49–arginine 52, serine 109, glutamate 114–glutamine 116, and glutamine 120. Cysteine 50 acts as the Nucleophile in catalysis. Glycine 198–serine 203 is an NADP(+) binding site.

This sequence belongs to the glutamyl-tRNA reductase family. Homodimer.

The catalysed reaction is (S)-4-amino-5-oxopentanoate + tRNA(Glu) + NADP(+) = L-glutamyl-tRNA(Glu) + NADPH + H(+). Its pathway is porphyrin-containing compound metabolism; protoporphyrin-IX biosynthesis; 5-aminolevulinate from L-glutamyl-tRNA(Glu): step 1/2. It participates in porphyrin-containing compound metabolism; chlorophyll biosynthesis. Its function is as follows. Catalyzes the NADPH-dependent reduction of glutamyl-tRNA(Glu) to glutamate 1-semialdehyde (GSA). This chain is Glutamyl-tRNA reductase, found in Parasynechococcus marenigrum (strain WH8102).